Consider the following 812-residue polypeptide: 1,4-alpha-glucan branching enzyme GlgB (812 aa).

Polar residues predominate over residues methionine 1 to alanine 11. The interval methionine 1–valine 83 is disordered. Residues serine 49 to valine 64 show a composition bias toward low complexity. The span at proline 65–valine 83 shows a compositional bias: pro residues. Aspartate 490 functions as the Nucleophile in the catalytic mechanism. Glutamate 543 acts as the Proton donor in catalysis.

Belongs to the glycosyl hydrolase 13 family. GlgB subfamily. Monomer.

It catalyses the reaction Transfers a segment of a (1-&gt;4)-alpha-D-glucan chain to a primary hydroxy group in a similar glucan chain.. Its pathway is glycan biosynthesis; glycogen biosynthesis. Its function is as follows. Catalyzes the formation of the alpha-1,6-glucosidic linkages in glycogen by scission of a 1,4-alpha-linked oligosaccharide from growing alpha-1,4-glucan chains and the subsequent attachment of the oligosaccharide to the alpha-1,6 position. The protein is 1,4-alpha-glucan branching enzyme GlgB of Frankia casuarinae (strain DSM 45818 / CECT 9043 / HFP020203 / CcI3).